The primary structure comprises 115 residues: Putative gamma-glutamylcyclotransferase VC_2546 (115 aa).

A substrate-binding site is contributed by 8–11 (YGTL). The Proton acceptor role is filled by E73.

This sequence belongs to the gamma-glutamylcyclotransferase family.

In terms of biological role, putative gamma-glutamylcyclotransferase. This is Putative gamma-glutamylcyclotransferase VC_2546 from Vibrio cholerae serotype O1 (strain ATCC 39315 / El Tor Inaba N16961).